We begin with the raw amino-acid sequence, 230 residues long: Proteasome subunit alpha (230 aa).

It belongs to the peptidase T1A family. The 20S proteasome core is composed of 14 alpha and 14 beta subunits that assemble into four stacked heptameric rings, resulting in a barrel-shaped structure. The two inner rings, each composed of seven catalytic beta subunits, are sandwiched by two outer rings, each composed of seven alpha subunits. The catalytic chamber with the active sites is on the inside of the barrel. Has a gated structure, the ends of the cylinder being occluded by the N-termini of the alpha-subunits. Is capped by the proteasome-associated ATPase, ARC.

It is found in the cytoplasm. It participates in protein degradation; proteasomal Pup-dependent pathway. With respect to regulation, the formation of the proteasomal ATPase ARC-20S proteasome complex, likely via the docking of the C-termini of ARC into the intersubunit pockets in the alpha-rings, may trigger opening of the gate for substrate entry. Interconversion between the open-gate and close-gate conformations leads to a dynamic regulation of the 20S proteasome proteolysis activity. In terms of biological role, component of the proteasome core, a large protease complex with broad specificity involved in protein degradation. The sequence is that of Proteasome subunit alpha from Thermomonospora curvata (strain ATCC 19995 / DSM 43183 / JCM 3096 / KCTC 9072 / NBRC 15933 / NCIMB 10081 / Henssen B9).